A 256-amino-acid chain; its full sequence is Thiazole synthase (256 aa).

The active-site Schiff-base intermediate with DXP is the Lys96. 1-deoxy-D-xylulose 5-phosphate contacts are provided by residues Gly157, 183-184 (AG), and 205-206 (NT).

The protein belongs to the ThiG family. In terms of assembly, homotetramer. Forms heterodimers with either ThiH or ThiS.

It is found in the cytoplasm. It catalyses the reaction [ThiS sulfur-carrier protein]-C-terminal-Gly-aminoethanethioate + 2-iminoacetate + 1-deoxy-D-xylulose 5-phosphate = [ThiS sulfur-carrier protein]-C-terminal Gly-Gly + 2-[(2R,5Z)-2-carboxy-4-methylthiazol-5(2H)-ylidene]ethyl phosphate + 2 H2O + H(+). It participates in cofactor biosynthesis; thiamine diphosphate biosynthesis. Functionally, catalyzes the rearrangement of 1-deoxy-D-xylulose 5-phosphate (DXP) to produce the thiazole phosphate moiety of thiamine. Sulfur is provided by the thiocarboxylate moiety of the carrier protein ThiS. In vitro, sulfur can be provided by H(2)S. This is Thiazole synthase from Bacillus cereus (strain G9842).